A 115-amino-acid polypeptide reads, in one-letter code: Nitrogenase-stabilizing/protective protein NifW (115 aa).

Belongs to the NifW family. As to quaternary structure, homotrimer; associates with NifD.

In terms of biological role, may protect the nitrogenase Fe-Mo protein from oxidative damage. The polypeptide is Nitrogenase-stabilizing/protective protein NifW (Rhodopseudomonas palustris (strain BisB18)).